Reading from the N-terminus, the 698-residue chain is D-(-)-3-hydroxybutyrate oligomer hydrolase (698 aa).

A signal peptide spans 1-32 (MTTIRGGSRRASLPALALLGVLLGACHSDDNA). Residue serine 310 is the Charge relay system of the active site.

This sequence belongs to the D-(-)-3-hydroxybutyrate oligomer hydrolase family.

It localises to the secreted. The enzyme catalyses (3R)-hydroxybutanoate dimer + H2O = 2 (R)-3-hydroxybutanoate + H(+). The protein operates within lipid metabolism; butanoate metabolism. Its function is as follows. Participates in the degradation of poly-3-hydroxybutyrate (PHB). It works downstream of poly(3-hydroxybutyrate) depolymerase, hydrolyzing D(-)-3-hydroxybutyrate oligomers of various length (3HB-oligomers) into 3HB-monomers. This is D-(-)-3-hydroxybutyrate oligomer hydrolase from Burkholderia thailandensis (strain ATCC 700388 / DSM 13276 / CCUG 48851 / CIP 106301 / E264).